Reading from the N-terminus, the 160-residue chain is Protein-export protein SecB (160 aa).

This sequence belongs to the SecB family. Homotetramer, a dimer of dimers. One homotetramer interacts with 1 SecA dimer.

It is found in the cytoplasm. One of the proteins required for the normal export of preproteins out of the cell cytoplasm. It is a molecular chaperone that binds to a subset of precursor proteins, maintaining them in a translocation-competent state. It also specifically binds to its receptor SecA. In Orientia tsutsugamushi (strain Boryong) (Rickettsia tsutsugamushi), this protein is Protein-export protein SecB.